The chain runs to 496 residues: Xylulose kinase (496 aa).

83–84 lines the substrate pocket; the sequence is MH. Asp-237 serves as the catalytic Proton acceptor.

This sequence belongs to the FGGY kinase family.

The catalysed reaction is D-xylulose + ATP = D-xylulose 5-phosphate + ADP + H(+). Its function is as follows. Catalyzes the phosphorylation of D-xylulose to D-xylulose 5-phosphate. The chain is Xylulose kinase from Staphylococcus epidermidis (strain ATCC 35984 / DSM 28319 / BCRC 17069 / CCUG 31568 / BM 3577 / RP62A).